Here is a 209-residue protein sequence, read N- to C-terminus: Ribosomal RNA large subunit methyltransferase E (209 aa).

The S-adenosyl-L-methionine site is built by Gly-63, Trp-65, Asp-83, Asp-99, and Asp-124. Lys-164 functions as the Proton acceptor in the catalytic mechanism.

Belongs to the class I-like SAM-binding methyltransferase superfamily. RNA methyltransferase RlmE family.

It is found in the cytoplasm. It catalyses the reaction uridine(2552) in 23S rRNA + S-adenosyl-L-methionine = 2'-O-methyluridine(2552) in 23S rRNA + S-adenosyl-L-homocysteine + H(+). Specifically methylates the uridine in position 2552 of 23S rRNA at the 2'-O position of the ribose in the fully assembled 50S ribosomal subunit. The chain is Ribosomal RNA large subunit methyltransferase E from Shewanella amazonensis (strain ATCC BAA-1098 / SB2B).